A 319-amino-acid chain; its full sequence is tRNA dimethylallyltransferase (319 aa).

9–16 serves as a coordination point for ATP; it reads GPTAVGKS. Residue 11–16 participates in substrate binding; sequence TAVGKS. The tract at residues 39–42 is interaction with substrate tRNA; the sequence is DSMQ.

It belongs to the IPP transferase family. As to quaternary structure, monomer. It depends on Mg(2+) as a cofactor.

It catalyses the reaction adenosine(37) in tRNA + dimethylallyl diphosphate = N(6)-dimethylallyladenosine(37) in tRNA + diphosphate. In terms of biological role, catalyzes the transfer of a dimethylallyl group onto the adenine at position 37 in tRNAs that read codons beginning with uridine, leading to the formation of N6-(dimethylallyl)adenosine (i(6)A). This Thermobifida fusca (strain YX) protein is tRNA dimethylallyltransferase.